The chain runs to 289 residues: Pantothenate synthetase (289 aa).

Position 30 to 37 (30 to 37) interacts with ATP; it reads MGYLHKGH. The active-site Proton donor is the His-37. Gln-61 contributes to the (R)-pantoate binding site. Gln-61 provides a ligand contact to beta-alanine. 147 to 150 is an ATP binding site; sequence GEKD. Residue Gln-153 coordinates (R)-pantoate. Residues Val-176 and 184–187 contribute to the ATP site; that span reads CSSR.

It belongs to the pantothenate synthetase family. Homodimer.

The protein localises to the cytoplasm. It catalyses the reaction (R)-pantoate + beta-alanine + ATP = (R)-pantothenate + AMP + diphosphate + H(+). Its pathway is cofactor biosynthesis; (R)-pantothenate biosynthesis; (R)-pantothenate from (R)-pantoate and beta-alanine: step 1/1. Its function is as follows. Catalyzes the condensation of pantoate with beta-alanine in an ATP-dependent reaction via a pantoyl-adenylate intermediate. This is Pantothenate synthetase from Allorhizobium ampelinum (strain ATCC BAA-846 / DSM 112012 / S4) (Agrobacterium vitis (strain S4)).